The following is a 680-amino-acid chain: tRNA 5-methylaminomethyl-2-thiouridine biosynthesis bifunctional protein MnmC (680 aa).

The interval 1 to 245 (MSHPPIQTAT…KREMLTGILP (245 aa)) is tRNA (mnm(5)s(2)U34)-methyltransferase. Positions 270–680 (IGGGIVSALT…PVQQRVSVLS (411 aa)) are FAD-dependent cmnm(5)s(2)U34 oxidoreductase.

It in the N-terminal section; belongs to the methyltransferase superfamily. tRNA (mnm(5)s(2)U34)-methyltransferase family. This sequence in the C-terminal section; belongs to the DAO family. Requires FAD as cofactor.

The protein localises to the cytoplasm. The catalysed reaction is 5-aminomethyl-2-thiouridine(34) in tRNA + S-adenosyl-L-methionine = 5-methylaminomethyl-2-thiouridine(34) in tRNA + S-adenosyl-L-homocysteine + H(+). Its function is as follows. Catalyzes the last two steps in the biosynthesis of 5-methylaminomethyl-2-thiouridine (mnm(5)s(2)U) at the wobble position (U34) in tRNA. Catalyzes the FAD-dependent demodification of cmnm(5)s(2)U34 to nm(5)s(2)U34, followed by the transfer of a methyl group from S-adenosyl-L-methionine to nm(5)s(2)U34, to form mnm(5)s(2)U34. In Yersinia enterocolitica serotype O:8 / biotype 1B (strain NCTC 13174 / 8081), this protein is tRNA 5-methylaminomethyl-2-thiouridine biosynthesis bifunctional protein MnmC.